We begin with the raw amino-acid sequence, 85 residues long: Large ribosomal subunit protein bL27 (85 aa).

The disordered stretch occupies residues 1-20 (MAHKKAGGSTRNGRDSEAKR).

This sequence belongs to the bacterial ribosomal protein bL27 family.

In Cronobacter sakazakii (strain ATCC BAA-894) (Enterobacter sakazakii), this protein is Large ribosomal subunit protein bL27.